We begin with the raw amino-acid sequence, 775 residues long: Semaphorin-3E (775 aa).

The first 25 residues, 1–25 (MASAGHIITLLLWGYLLELWTGGHT), serve as a signal peptide directing secretion. Positions 32–516 (RLRLSHKELL…SASAVAQVRF (485 aa)) constitute a Sema domain. N-linked (GlcNAc...) asparagine glycosylation is present at asparagine 44. Cysteine 105 and cysteine 115 are oxidised to a cystine. N-linked (GlcNAc...) asparagine glycosylation is present at asparagine 126. Cystine bridges form between cysteine 133–cysteine 142, cysteine 270–cysteine 382, cysteine 294–cysteine 342, and cysteine 519–cysteine 537. The N-linked (GlcNAc...) asparagine glycan is linked to asparagine 330. Positions 581–669 (ALDKTEEHLA…SFVHTVRKIT (89 aa)) constitute an Ig-like C2-type domain. N-linked (GlcNAc...) asparagine glycosylation is found at asparagine 595 and asparagine 596. Residues cysteine 654 and cysteine 729 are joined by a disulfide bond. A disordered region spans residues 742–775 (LKMSPSKWKYANPQEKKLRSKPEHYRLPRHTLDS). Residues 755–775 (QEKKLRSKPEHYRLPRHTLDS) show a composition bias toward basic and acidic residues.

The protein belongs to the semaphorin family. As to quaternary structure, interacts with PLXND1.

Its subcellular location is the secreted. Its function is as follows. Plays an important role in signaling via the cell surface receptor PLXND1. Mediates reorganization of the actin cytoskeleton, leading to the retraction of cell projections. Promotes focal adhesion disassembly and inhibits adhesion of endothelial cells to the extracellular matrix. Regulates angiogenesis, both during embryogenesis and after birth. Can down-regulate sprouting angiogenesis. Required for normal vascular patterning during embryogenesis. Plays an important role in ensuring the specificity of synapse formation. This is Semaphorin-3E (SEMA3E) from Homo sapiens (Human).